The following is a 1241-amino-acid chain: Phosphorylase b kinase regulatory subunit alpha, skeletal muscle isoform (1241 aa).

Ser-629, Ser-730, Ser-736, Ser-739, Ser-759, Ser-812, Ser-973, Ser-982, and Ser-986 each carry phosphoserine. Positions 811 to 841 (LSELYVKVGEIRHWGLIRYISGILRKKVEAL) are calmodulin-binding. Ser-1008 bears the Phosphoserine; by autocatalysis mark. Ser-1019 carries the post-translational modification Phosphoserine; by PKA. Phosphoserine is present on residues Ser-1021 and Ser-1024. Positions 1064–1104 (SKDSRQGQWQRRRRLDGALNRVPIGFYQKVWKILQKCHGLS) are calmodulin-binding. Ser-1131 bears the Phosphoserine mark. Cys-1238 carries the S-farnesyl cysteine lipid modification.

It belongs to the phosphorylase b kinase regulatory chain family. As to quaternary structure, hexadecamer of 4 heterotetramers, each composed of alpha, beta, gamma, and delta subunits. Alpha (PHKA1 or PHKA2) and beta (PHKB) are regulatory subunits, gamma (PHKG1 or PHKG2) is the catalytic subunit, and delta is calmodulin. In terms of processing, although the final Cys may be farnesylated, the terminal tripeptide is probably not removed, and the C-terminus is not methylated. As to expression, both isoforms are expressed in muscle.

It is found in the cell membrane. It participates in glycan biosynthesis; glycogen metabolism. By phosphorylation of various serine residues and by calcium. Functionally, phosphorylase b kinase catalyzes the phosphorylation of serine in certain substrates, including troponin I. The alpha chain may bind calmodulin. In Mus musculus (Mouse), this protein is Phosphorylase b kinase regulatory subunit alpha, skeletal muscle isoform (Phka1).